Here is a 176-residue protein sequence, read N- to C-terminus: NAD(P)H-quinone oxidoreductase subunit 6, chloroplastic (176 aa).

5 consecutive transmembrane segments (helical) span residues 10-30 (FLLV…VLLP), 32-52 (PIFS…LYIL), 61-81 (AQLL…VMFM), 92-112 (LWTV…FLLM), and 152-172 (FFLP…GAIS).

Belongs to the complex I subunit 6 family. In terms of assembly, NDH is composed of at least 16 different subunits, 5 of which are encoded in the nucleus.

It localises to the plastid. The protein resides in the chloroplast thylakoid membrane. It carries out the reaction a plastoquinone + NADH + (n+1) H(+)(in) = a plastoquinol + NAD(+) + n H(+)(out). The catalysed reaction is a plastoquinone + NADPH + (n+1) H(+)(in) = a plastoquinol + NADP(+) + n H(+)(out). Its function is as follows. NDH shuttles electrons from NAD(P)H:plastoquinone, via FMN and iron-sulfur (Fe-S) centers, to quinones in the photosynthetic chain and possibly in a chloroplast respiratory chain. The immediate electron acceptor for the enzyme in this species is believed to be plastoquinone. Couples the redox reaction to proton translocation, and thus conserves the redox energy in a proton gradient. The sequence is that of NAD(P)H-quinone oxidoreductase subunit 6, chloroplastic (ndhG) from Olimarabidopsis pumila (Dwarf rocket).